We begin with the raw amino-acid sequence, 90 residues long: U7-theraphotoxin-Hhn1e (90 aa).

Residues 1–19 form the signal peptide; sequence MKTAIFTVVLALAVFAVLS. Residues 20–50 constitute a propeptide that is removed on maturation; sequence FGWEANEKALSEEFTELIHEKEAASETEARE. Intrachain disulfides connect C51–C65, C58–C70, and C64–C81.

The protein belongs to the neurotoxin 10 (Hwtx-1) family. 13 (Hntx-13) subfamily. In terms of tissue distribution, expressed by the venom gland.

It is found in the secreted. Its function is as follows. Ion channel inhibitor. The sequence is that of U7-theraphotoxin-Hhn1e from Cyriopagopus hainanus (Chinese bird spider).